Consider the following 57-residue polypeptide: DNA-directed RNA polymerase subunit Rpo6 (57 aa).

It belongs to the archaeal Rpo6/eukaryotic RPB6 RNA polymerase subunit family. Part of the RNA polymerase complex.

The protein resides in the cytoplasm. It carries out the reaction RNA(n) + a ribonucleoside 5'-triphosphate = RNA(n+1) + diphosphate. In terms of biological role, DNA-dependent RNA polymerase (RNAP) catalyzes the transcription of DNA into RNA using the four ribonucleoside triphosphates as substrates. The protein is DNA-directed RNA polymerase subunit Rpo6 of Pyrococcus furiosus (strain ATCC 43587 / DSM 3638 / JCM 8422 / Vc1).